The following is a 1129-amino-acid chain: Protein LANA1 (1129 aa).

2 disordered regions span residues 1-988 (MAPP…PVPY) and 1110-1129 (LPLT…QEMT). 2 stretches are compositionally biased toward basic and acidic residues: residues 28–41 (RSPE…DLHL) and 48–58 (VADSVDGRECG). A compositionally biased stretch (pro residues) spans 85-104 (PVAPIPSPAPATPLPPPALL). Residues 139–156 (SPESSQRPPLSSPTGRPD) are compositionally biased toward polar residues. Residues 161 to 185 (MRPPPSQQTTPPHSPTTPPPEPPSK) show a composition bias toward pro residues. The segment covering 186–197 (SSPDSLAPSTLR) has biased composition (low complexity). The segment covering 207 to 217 (PQGPSTLNPIC) has biased composition (polar residues). Residues 263–275 (PISIGSSSPSEGS) are compositionally biased toward low complexity. Composition is skewed to basic and acidic residues over residues 292–301 (EASKNEKECS) and 314–323 (EISKESQVDK). Over residues 324 to 419 (DDNDNKDDEE…DKKEDEEDGG (96 aa)) the composition is skewed to acidic residues. Over residues 431–471 (QQQQEPQQQEPQQQEPQQQEPQQQEPQQQEPQQQEPQQQEP) the composition is skewed to low complexity. The span at 472 to 528 (QQREPQQREPQQREPQQREPQQREPQQREPQQREPQQREPQQREPQQREPQQREPQQ) shows a compositional bias: basic and acidic residues. Positions 529 to 596 (REPQQQEPQQ…QQQEPQQQDE (68 aa)) are enriched in low complexity. Acidic residues predominate over residues 597–888 (QQQDEQQQDE…QELEEVEEQE (292 aa)). The segment covering 924 to 934 (THEQIASSPPG) has biased composition (polar residues). A compositionally biased stretch (basic residues) spans 962 to 979 (PGVRMRRVPVTHPKKPHP). The interval 1008–1129 (FLGKDGRRDP…GPGDSPQEMT (122 aa)) is DNA-binding domain.

In terms of assembly, homooligomer. Interacts with host BRD2. Interacts with host RELA, ELOB, ELOC and CUL5; these interactions induce the proteasomal degradation of host RELA. Interacts with host TRIM28 and NFE2L2/NRF2; these interactions are essential for the shutdown of lytic gene expression during the early stage of infection. Interacts (via N-terminus) with host histones H2A and H2B; these interactions are essential to dock LANA1 onto chromosomes. Interacts with host BUB1 and PCNA. Interacts with host NAP1L1; this interaction is required for LANA1-dependent DNA replication. Interacts with components of the host MLL1 complex KMT2A and WDR5.

The protein resides in the host nucleus. In terms of biological role, multifunctional protein that plays a role in the replication and long-term persistence of the viral episomal genome in dividing cells. Binds to mitotic chromosomes via its N-terminal region and to a 16-bp imperfect palindrome within the origin of replication (oriP) located in the viral terminal repeat (TR) through its C-terminal. Tethers viral episomes to chromosomes during mitosis. Plays a critical role in the shutdown of lytic gene expression during the early stage of infection by interacting with host TRIM28. Also plays a role in the repression of host NF-kappa-B activity upon TNF-alpha stimulation by promoting the proteasomal degradation of host RELA. Promotes nuclear localization and cleavage of host STAT6 leading to constitutive activation of the IL13/STAT6 signaling pathway to promote viral latency. Interacts with and modulates the histone methyltransferase MLL1 complex activity, leading to its recruitment on viral DNA terminal repeats changing the dynamic of histone H3 methylated 'Lys-4'(H3K4me) profile during the initial hours following infection. This is Protein LANA1 (LANA1) from Homo sapiens (Human).